We begin with the raw amino-acid sequence, 319 residues long: MKRIGVLTSGGDSPGMNAAIRAVVRKAIFHDIEVYGIYHGYAGLISGHIEKLELGSVGDIIHRGGTKLYTARCPEFKDPEVRLKGIEQLKKHGIEGLVVIGGDGSYQGAKKLTEQGFPCVGVPGTIDNDIPGTDFTIGFDTALNTVIDAIDKIRDTATSHERTYVIEVMGRHAGDIALWAGLADGAETILIPEEEYDMDDVIARLKRGSERGKKHSIIVVAEGVGSAIDIGKHIEEATNFDTRVTVLGHVQRGGSPSAQDRVLASRLGARAVELLIAGKGGRCVGIQDNKLVDHDIIEALAQKHTIDKDMYQLSKELSI.

Gly11 is a binding site for ATP. 21–25 (RAVVR) contributes to the ADP binding site. Residues 72 to 73 (RC) and 102 to 105 (GDGS) contribute to the ATP site. Residue Asp103 coordinates Mg(2+). Position 125–127 (125–127 (TID)) interacts with substrate. Catalysis depends on Asp127, which acts as the Proton acceptor. Position 154 (Arg154) interacts with ADP. Residues Arg162 and 169 to 171 (MGR) contribute to the substrate site. Residues 185–187 (GAE), Arg211, and 213–215 (KKH) each bind ADP. Substrate-binding positions include Glu222, Arg243, and 249–252 (HVQR).

It belongs to the phosphofructokinase type A (PFKA) family. ATP-dependent PFK group I subfamily. Prokaryotic clade 'B1' sub-subfamily. As to quaternary structure, homotetramer. Requires Mg(2+) as cofactor.

Its subcellular location is the cytoplasm. The catalysed reaction is beta-D-fructose 6-phosphate + ATP = beta-D-fructose 1,6-bisphosphate + ADP + H(+). It functions in the pathway carbohydrate degradation; glycolysis; D-glyceraldehyde 3-phosphate and glycerone phosphate from D-glucose: step 3/4. Its activity is regulated as follows. Allosterically activated by ADP and other diphosphonucleosides, and allosterically inhibited by phosphoenolpyruvate. Its function is as follows. Catalyzes the phosphorylation of D-fructose 6-phosphate to fructose 1,6-bisphosphate by ATP, the first committing step of glycolysis. This Bacillus cereus (strain B4264) protein is ATP-dependent 6-phosphofructokinase.